Consider the following 358-residue polypeptide: L-lysine 3-hydroxylase (358 aa).

Fe cation is bound by residues histidine 178, glutamate 180, and histidine 314. Position 328 (arginine 328) interacts with 2-oxoglutarate.

Belongs to the clavaminate synthase family. Requires Fe(2+) as cofactor.

It carries out the reaction L-lysine + 2-oxoglutarate + O2 = (3S)-3-hydroxy-L-lysine + succinate + CO2. In terms of biological role, alpha-ketoglutarate-dependent dioxygenase that in vitro catalyzes the regio- and stereoselective hydroxylation of L-lysine, leading to (3S)-3-hydroxy-L-lysine. Can also use (5R)-5-hydroxy-L-lysine as substrate, but neither D-lysine nor L-ornithine. The sequence is that of L-lysine 3-hydroxylase from Catenulispora acidiphila (strain DSM 44928 / JCM 14897 / NBRC 102108 / NRRL B-24433 / ID139908).